The chain runs to 111 residues: Large ribosomal subunit protein uL22 (111 aa).

The protein belongs to the universal ribosomal protein uL22 family. As to quaternary structure, part of the 50S ribosomal subunit.

Functionally, this protein binds specifically to 23S rRNA; its binding is stimulated by other ribosomal proteins, e.g. L4, L17, and L20. It is important during the early stages of 50S assembly. It makes multiple contacts with different domains of the 23S rRNA in the assembled 50S subunit and ribosome. The globular domain of the protein is located near the polypeptide exit tunnel on the outside of the subunit, while an extended beta-hairpin is found that lines the wall of the exit tunnel in the center of the 70S ribosome. The sequence is that of Large ribosomal subunit protein uL22 from Acidithiobacillus ferrooxidans (strain ATCC 23270 / DSM 14882 / CIP 104768 / NCIMB 8455) (Ferrobacillus ferrooxidans (strain ATCC 23270)).